Reading from the N-terminus, the 330-residue chain is Ketol-acid reductoisomerase (NADP(+)) (330 aa).

The KARI N-terminal Rossmann domain maps to 2-182 (ARLYYDTDAN…GGTRAGILET (181 aa)). Residues 25–28 (YGSQ), Ser51, Ser53, and 83–86 (DEVQ) contribute to the NADP(+) site. The active site involves His108. Gly134 serves as a coordination point for NADP(+). Positions 183 to 328 (TFREETETDL…RELRAMFSWL (146 aa)) constitute a KARI C-terminal knotted domain. Residues Asp191, Glu195, Glu227, and Glu231 each coordinate Mg(2+). Ser252 serves as a coordination point for substrate.

The protein belongs to the ketol-acid reductoisomerase family. Requires Mg(2+) as cofactor.

The catalysed reaction is (2R)-2,3-dihydroxy-3-methylbutanoate + NADP(+) = (2S)-2-acetolactate + NADPH + H(+). It catalyses the reaction (2R,3R)-2,3-dihydroxy-3-methylpentanoate + NADP(+) = (S)-2-ethyl-2-hydroxy-3-oxobutanoate + NADPH + H(+). The protein operates within amino-acid biosynthesis; L-isoleucine biosynthesis; L-isoleucine from 2-oxobutanoate: step 2/4. Its pathway is amino-acid biosynthesis; L-valine biosynthesis; L-valine from pyruvate: step 2/4. Involved in the biosynthesis of branched-chain amino acids (BCAA). Catalyzes an alkyl-migration followed by a ketol-acid reduction of (S)-2-acetolactate (S2AL) to yield (R)-2,3-dihydroxy-isovalerate. In the isomerase reaction, S2AL is rearranged via a Mg-dependent methyl migration to produce 3-hydroxy-3-methyl-2-ketobutyrate (HMKB). In the reductase reaction, this 2-ketoacid undergoes a metal-dependent reduction by NADPH to yield (R)-2,3-dihydroxy-isovalerate. In Synechococcus sp. (strain JA-2-3B'a(2-13)) (Cyanobacteria bacterium Yellowstone B-Prime), this protein is Ketol-acid reductoisomerase (NADP(+)).